A 681-amino-acid polypeptide reads, in one-letter code: Peroxisomal acyl-coenzyme A oxidase 2 (681 aa).

A Phosphoserine modification is found at S9. Residues K66, K137, K453, K561, and K667 each carry the N6-succinyllysine modification. Residues 679–681 (SNL) carry the Microbody targeting signal motif.

This sequence belongs to the acyl-CoA oxidase family. Homodimer. Requires FAD as cofactor. As to expression, liver and kidney.

The protein localises to the peroxisome. The enzyme catalyses (25R)-3alpha,7alpha,12alpha-trihydroxy-5beta-cholestan-26-oyl-CoA + A + H2O = (24R,25R)-3alpha,7alpha,12alpha,24-tetrahydroxy-5beta-cholestan-26-oyl-CoA + AH2. It carries out the reaction (25S)-3alpha,7alpha,12alpha-trihydroxy-5beta-cholestan-26-oyl-CoA + O2 = (24E)-3alpha,7alpha,12alpha-trihydroxy-5beta-cholest-24-en-26-oyl-CoA + H2O2. Its function is as follows. Oxidizes the CoA esters of the bile acid intermediates di- and tri-hydroxycholestanoic acids. Capable of oxidizing short as well as long chain 2-methyl branched fatty acids. This chain is Peroxisomal acyl-coenzyme A oxidase 2, found in Oryctolagus cuniculus (Rabbit).